The primary structure comprises 1066 residues: Ubiquitin conjugation factor E4 A (1066 aa).

Residues 35-57 form a disordered region; that stretch reads QLKQQSDELPASPDDSDNSVSES. An N6-acetyllysine modification is found at lysine 386. One can recognise a U-box domain in the interval 987–1061; it reads DACDEFLDPI…QRWLAERKQQ (75 aa).

Belongs to the ubiquitin conjugation factor E4 family.

It localises to the cytoplasm. The catalysed reaction is S-ubiquitinyl-[E2 ubiquitin-conjugating enzyme]-L-cysteine + [acceptor protein]-L-lysine = [E2 ubiquitin-conjugating enzyme]-L-cysteine + N(6)-ubiquitinyl-[acceptor protein]-L-lysine.. Its pathway is protein modification; protein ubiquitination. In terms of biological role, ubiquitin-protein ligase that probably functions as an E3 ligase in conjunction with specific E1 and E2 ligases. May also function as an E4 ligase mediating the assembly of polyubiquitin chains on substrates ubiquitinated by another E3 ubiquitin ligase. Mediates 'Lys-48'-linked polyubiquitination of substrates. The chain is Ubiquitin conjugation factor E4 A from Rattus norvegicus (Rat).